Consider the following 702-residue polypeptide: Penicillin-binding protein activator LpoA (702 aa).

A signal peptide spans 1–26 (MVPSTFLRSKPARCLPVLLATLIFAG). The N-palmitoyl cysteine moiety is linked to residue Cys27. Residue Cys27 is the site of S-diacylglycerol cysteine attachment. A disordered region spans residues 327–378 (GSRADPVQAPTQDQAAPAAEPAAQAPATSTTPQTTASPATQPVTAPAAQPQP). Residues 330 to 378 (ADPVQAPTQDQAAPAAEPAAQAPATSTTPQTTASPATQPVTAPAAQPQP) are compositionally biased toward low complexity.

This sequence belongs to the LpoA family. As to quaternary structure, interacts with PBP1a.

Its subcellular location is the cell outer membrane. Its function is as follows. Regulator of peptidoglycan synthesis that is essential for the function of penicillin-binding protein 1A (PBP1a). The sequence is that of Penicillin-binding protein activator LpoA from Klebsiella pneumoniae subsp. pneumoniae (strain ATCC 700721 / MGH 78578).